A 340-amino-acid chain; its full sequence is Extracellular matrix protein-binding protein emp (340 aa).

An N-terminal signal peptide occupies residues 1–26 (MKKKLLVLTMSTLFATQLINSNHANA).

The protein resides in the cell surface. In terms of biological role, adhesin that binds to the host cell extracellular matrix proteins fibronectin, fibrinogen, collagen, and vitronectin. This chain is Extracellular matrix protein-binding protein emp (emp), found in Staphylococcus aureus.